We begin with the raw amino-acid sequence, 224 residues long: Small ribosomal subunit protein eS1 (224 aa).

Belongs to the eukaryotic ribosomal protein eS1 family.

This Methanococcus maripaludis (strain C7 / ATCC BAA-1331) protein is Small ribosomal subunit protein eS1.